The following is a 297-amino-acid chain: Homoserine kinase (297 aa).

82 to 92 is a binding site for ATP; sequence PLTRGLGSSAS.

The protein belongs to the GHMP kinase family. Homoserine kinase subfamily.

The protein resides in the cytoplasm. It catalyses the reaction L-homoserine + ATP = O-phospho-L-homoserine + ADP + H(+). The protein operates within amino-acid biosynthesis; L-threonine biosynthesis; L-threonine from L-aspartate: step 4/5. In terms of biological role, catalyzes the ATP-dependent phosphorylation of L-homoserine to L-homoserine phosphate. The sequence is that of Homoserine kinase from Bacillus thuringiensis (strain Al Hakam).